The chain runs to 530 residues: Probable ATP-binding protein YbiT (530 aa).

2 ABC transporter domains span residues 2–252 and 320–526; these read LVSS…ERLL and LEVE…YLRS. ATP contacts are provided by residues 34 to 41 and 352 to 359; these read GANGSGKS and GTNGVGKS.

This sequence belongs to the ABC transporter superfamily. ABCF family. YbiT subfamily.

This is Probable ATP-binding protein YbiT (ybiT) from Escherichia coli O157:H7.